We begin with the raw amino-acid sequence, 130 residues long: Small ribosomal subunit protein uS8 (130 aa).

It belongs to the universal ribosomal protein uS8 family. As to quaternary structure, part of the 30S ribosomal subunit. Contacts proteins S5 and S12.

One of the primary rRNA binding proteins, it binds directly to 16S rRNA central domain where it helps coordinate assembly of the platform of the 30S subunit. The polypeptide is Small ribosomal subunit protein uS8 (Enterobacter sp. (strain 638)).